We begin with the raw amino-acid sequence, 314 residues long: Olfactory receptor 8D4 (314 aa).

Residues 1–25 lie on the Extracellular side of the membrane; it reads MGVKNHSTVTEFLLSGLTEQAELQL. An N-linked (GlcNAc...) asparagine glycan is attached at N5. Residues 26-46 form a helical membrane-spanning segment; that stretch reads PLFCLFLGIYTVTVVGNLSMI. Over 47-54 the chain is Cytoplasmic; that stretch reads SIIRLNRQ. Residues 55 to 75 traverse the membrane as a helical segment; that stretch reads LHTPMYYFLSSLSFLDFCYSS. The Extracellular segment spans residues 76-99; that stretch reads VITPKMLSGFLCRDRSISYSGCMI. A disulfide bridge connects residues C97 and C189. A helical membrane pass occupies residues 100-120; that stretch reads QLFFFCVCVISECYMLAAMAC. Over 121-139 the chain is Cytoplasmic; that stretch reads DRYVAICSPLLYRVIMSPR. The helical transmembrane segment at 140–160 threads the bilayer; the sequence is VCSLLVAAVFSVGFTDAVIHG. At 161-197 the chain is on the extracellular side; it reads GCILRLSFCGSNIIKHYFCDIVPLIKLSCSSTYIDEL. Residues 198–217 form a helical membrane-spanning segment; it reads LIFVIGGFNMVATSLTIIIS. The Cytoplasmic segment spans residues 218–237; it reads YAFILTSILRIHSKKGRCKA. The helical transmembrane segment at 238–258 threads the bilayer; that stretch reads FSTCSSHLTAVLMFYGSLMSM. Residues 259 to 271 are Extracellular-facing; that stretch reads YLKPASSSSLTQE. The chain crosses the membrane as a helical span at residues 272–292; the sequence is KVSSVFYTTVILMLNPLIYSL. Residues 293–314 lie on the Cytoplasmic side of the membrane; that stretch reads RNNEVRNALMKLLRRKISLSPG.

The protein belongs to the G-protein coupled receptor 1 family.

Its subcellular location is the cell membrane. Its function is as follows. Odorant receptor. The sequence is that of Olfactory receptor 8D4 (OR8D4) from Homo sapiens (Human).